The sequence spans 457 residues: Argininosuccinate lyase (457 aa).

The protein belongs to the lyase 1 family. Argininosuccinate lyase subfamily.

The protein localises to the cytoplasm. The enzyme catalyses 2-(N(omega)-L-arginino)succinate = fumarate + L-arginine. It functions in the pathway amino-acid biosynthesis; L-arginine biosynthesis; L-arginine from L-ornithine and carbamoyl phosphate: step 3/3. This chain is Argininosuccinate lyase, found in Psychrobacter arcticus (strain DSM 17307 / VKM B-2377 / 273-4).